The following is a 119-amino-acid chain: Large ribosomal subunit protein uL22 (119 aa).

Belongs to the universal ribosomal protein uL22 family. As to quaternary structure, part of the 50S ribosomal subunit.

This protein binds specifically to 23S rRNA; its binding is stimulated by other ribosomal proteins, e.g. L4, L17, and L20. It is important during the early stages of 50S assembly. It makes multiple contacts with different domains of the 23S rRNA in the assembled 50S subunit and ribosome. In terms of biological role, the globular domain of the protein is located near the polypeptide exit tunnel on the outside of the subunit, while an extended beta-hairpin is found that lines the wall of the exit tunnel in the center of the 70S ribosome. This is Large ribosomal subunit protein uL22 from Rickettsia peacockii (strain Rustic).